The primary structure comprises 41 residues: Large ribosomal subunit protein bL36 (41 aa).

The protein belongs to the bacterial ribosomal protein bL36 family.

This chain is Large ribosomal subunit protein bL36, found in Bartonella tribocorum (strain CIP 105476 / IBS 506).